A 274-amino-acid polypeptide reads, in one-letter code: Putative phosphoenolpyruvate synthase regulatory protein (274 aa).

Position 155–162 (155–162 (GVSRSGKT)) interacts with ADP.

This sequence belongs to the pyruvate, phosphate/water dikinase regulatory protein family. PSRP subfamily.

It carries out the reaction [pyruvate, water dikinase] + ADP = [pyruvate, water dikinase]-phosphate + AMP + H(+). It catalyses the reaction [pyruvate, water dikinase]-phosphate + phosphate + H(+) = [pyruvate, water dikinase] + diphosphate. Functionally, bifunctional serine/threonine kinase and phosphorylase involved in the regulation of the phosphoenolpyruvate synthase (PEPS) by catalyzing its phosphorylation/dephosphorylation. The polypeptide is Putative phosphoenolpyruvate synthase regulatory protein (Laribacter hongkongensis (strain HLHK9)).